Consider the following 322-residue polypeptide: Quinolinate synthase (322 aa).

2 residues coordinate iminosuccinate: His-38 and Ser-55. Position 100 (Cys-100) interacts with [4Fe-4S] cluster. Residues 126–128 (YIN) and Ser-143 each bind iminosuccinate. Cys-186 is a binding site for [4Fe-4S] cluster. Iminosuccinate contacts are provided by residues 212 to 214 (HPE) and Thr-229. Position 279 (Cys-279) interacts with [4Fe-4S] cluster.

It belongs to the quinolinate synthase family. Type 2 subfamily. Requires [4Fe-4S] cluster as cofactor.

Its subcellular location is the cytoplasm. The enzyme catalyses iminosuccinate + dihydroxyacetone phosphate = quinolinate + phosphate + 2 H2O + H(+). It participates in cofactor biosynthesis; NAD(+) biosynthesis; quinolinate from iminoaspartate: step 1/1. In terms of biological role, catalyzes the condensation of iminoaspartate with dihydroxyacetone phosphate to form quinolinate. The sequence is that of Quinolinate synthase from Cyanothece sp. (strain PCC 7425 / ATCC 29141).